Reading from the N-terminus, the 273-residue chain is Dermonecrotic toxin LdSicTox-alphaIB1bi (273 aa).

Residue histidine 5 is part of the active site. Mg(2+) is bound by residues glutamate 25 and aspartate 27. Histidine 41 functions as the Nucleophile in the catalytic mechanism. 2 cysteine pairs are disulfide-bonded: cysteine 45–cysteine 51 and cysteine 47–cysteine 190. Aspartate 85 lines the Mg(2+) pocket. The N-linked (GlcNAc...) asparagine glycan is linked to asparagine 250.

Belongs to the arthropod phospholipase D family. Class II subfamily. The cofactor is Mg(2+). In terms of tissue distribution, expressed by the venom gland.

It localises to the secreted. It catalyses the reaction an N-(acyl)-sphingosylphosphocholine = an N-(acyl)-sphingosyl-1,3-cyclic phosphate + choline. It carries out the reaction an N-(acyl)-sphingosylphosphoethanolamine = an N-(acyl)-sphingosyl-1,3-cyclic phosphate + ethanolamine. The catalysed reaction is a 1-acyl-sn-glycero-3-phosphocholine = a 1-acyl-sn-glycero-2,3-cyclic phosphate + choline. The enzyme catalyses a 1-acyl-sn-glycero-3-phosphoethanolamine = a 1-acyl-sn-glycero-2,3-cyclic phosphate + ethanolamine. In terms of biological role, dermonecrotic toxins cleave the phosphodiester linkage between the phosphate and headgroup of certain phospholipids (sphingolipid and lysolipid substrates), forming an alcohol (often choline) and a cyclic phosphate. This toxin acts on sphingomyelin (SM). It may also act on ceramide phosphoethanolamine (CPE), lysophosphatidylcholine (LPC) and lysophosphatidylethanolamine (LPE), but not on lysophosphatidylserine (LPS), and lysophosphatidylglycerol (LPG). It acts by transphosphatidylation, releasing exclusively cyclic phosphate products as second products. Induces dermonecrosis, hemolysis, increased vascular permeability, edema, inflammatory response, and platelet aggregation. This Loxosceles deserta (Desert recluse spider) protein is Dermonecrotic toxin LdSicTox-alphaIB1bi.